A 274-amino-acid polypeptide reads, in one-letter code: 2,3,4,5-tetrahydropyridine-2,6-dicarboxylate N-succinyltransferase (274 aa).

Residues R104 and D141 each coordinate substrate.

This sequence belongs to the transferase hexapeptide repeat family. Homotrimer.

It localises to the cytoplasm. The enzyme catalyses (S)-2,3,4,5-tetrahydrodipicolinate + succinyl-CoA + H2O = (S)-2-succinylamino-6-oxoheptanedioate + CoA. The protein operates within amino-acid biosynthesis; L-lysine biosynthesis via DAP pathway; LL-2,6-diaminopimelate from (S)-tetrahydrodipicolinate (succinylase route): step 1/3. In Shewanella frigidimarina (strain NCIMB 400), this protein is 2,3,4,5-tetrahydropyridine-2,6-dicarboxylate N-succinyltransferase.